We begin with the raw amino-acid sequence, 22 residues long: NDMA-dependent alcohol dehydrogenase (22 aa).

It belongs to the zinc-containing alcohol dehydrogenase family. As to quaternary structure, homotetramer. The cofactor is NADH.

It is found in the cytoplasm. It carries out the reaction N,N-dimethyl-4-nitrosoaniline + a primary alcohol = 4-(hydroxylamino)-N,N-dimethylaniline + an aldehyde. It catalyses the reaction ethanol + A = acetaldehyde + AH2. In terms of biological role, this is a novel enzyme, catalytically different from common alcohol dehydrogenases. It is effective in oxidizing ethanol, other primary alcohols and benzylalcohol only in the presence of p-nitroso-N,N-dimethylaniline (NDMA) as an electron acceptor. NADH acts as a cofactor here instead of as a coenzyme. This Rhodococcus erythropolis (Arthrobacter picolinophilus) protein is NDMA-dependent alcohol dehydrogenase.